The sequence spans 336 residues: Pyridoxal 5'-phosphate synthase subunit PdxS (336 aa).

Residue D62 participates in D-ribose 5-phosphate binding. K119 (schiff-base intermediate with D-ribose 5-phosphate) is an active-site residue. Residue G191 participates in D-ribose 5-phosphate binding. K203 contributes to the D-glyceraldehyde 3-phosphate binding site. D-ribose 5-phosphate contacts are provided by residues G254 and 275 to 276 (GS).

The protein belongs to the PdxS/SNZ family. As to quaternary structure, in the presence of PdxT, forms a dodecamer of heterodimers.

The catalysed reaction is aldehydo-D-ribose 5-phosphate + D-glyceraldehyde 3-phosphate + L-glutamine = pyridoxal 5'-phosphate + L-glutamate + phosphate + 3 H2O + H(+). Its pathway is cofactor biosynthesis; pyridoxal 5'-phosphate biosynthesis. Its function is as follows. Catalyzes the formation of pyridoxal 5'-phosphate from ribose 5-phosphate (RBP), glyceraldehyde 3-phosphate (G3P) and ammonia. The ammonia is provided by the PdxT subunit. Can also use ribulose 5-phosphate and dihydroxyacetone phosphate as substrates, resulting from enzyme-catalyzed isomerization of RBP and G3P, respectively. The polypeptide is Pyridoxal 5'-phosphate synthase subunit PdxS (Pyrobaculum calidifontis (strain DSM 21063 / JCM 11548 / VA1)).